We begin with the raw amino-acid sequence, 207 residues long: Riboflavin synthase (207 aa).

2 Lumazine-binding repeats span residues Met-1–His-94 and Ile-95–Leu-191. Residues Gly-4 to Val-6, Cys-45 to Thr-47, Asp-59 to Thr-64, Gly-98 to Val-100, Lys-133, Ser-142 to Thr-144, and Asn-156 to Thr-161 each bind 2,4-dihydroxypteridine.

In terms of assembly, homotrimer.

The enzyme catalyses 2 6,7-dimethyl-8-(1-D-ribityl)lumazine + H(+) = 5-amino-6-(D-ribitylamino)uracil + riboflavin. Its pathway is cofactor biosynthesis; riboflavin biosynthesis; riboflavin from 2-hydroxy-3-oxobutyl phosphate and 5-amino-6-(D-ribitylamino)uracil: step 2/2. In terms of biological role, catalyzes the dismutation of two molecules of 6,7-dimethyl-8-ribityllumazine, resulting in the formation of riboflavin and 5-amino-6-(D-ribitylamino)uracil. In Aquifex aeolicus (strain VF5), this protein is Riboflavin synthase (ribE).